Consider the following 155-residue polypeptide: Ribosome maturation factor RimP (155 aa).

It belongs to the RimP family.

It is found in the cytoplasm. In terms of biological role, required for maturation of 30S ribosomal subunits. In Prochlorococcus marinus (strain AS9601), this protein is Ribosome maturation factor RimP.